We begin with the raw amino-acid sequence, 292 residues long: NAD kinase (292 aa).

Catalysis depends on aspartate 73, which acts as the Proton acceptor. NAD(+)-binding positions include 73–74, 147–148, histidine 158, arginine 175, aspartate 177, 188–193, and glutamine 247; these read DG, NE, and TAYSLS.

This sequence belongs to the NAD kinase family. Requires a divalent metal cation as cofactor.

Its subcellular location is the cytoplasm. The catalysed reaction is NAD(+) + ATP = ADP + NADP(+) + H(+). Its function is as follows. Involved in the regulation of the intracellular balance of NAD and NADP, and is a key enzyme in the biosynthesis of NADP. Catalyzes specifically the phosphorylation on 2'-hydroxyl of the adenosine moiety of NAD to yield NADP. This Shigella boydii serotype 18 (strain CDC 3083-94 / BS512) protein is NAD kinase.